Here is a 500-residue protein sequence, read N- to C-terminus: Aspartyl/glutamyl-tRNA(Asn/Gln) amidotransferase subunit B (500 aa).

Belongs to the GatB/GatE family. GatB subfamily. Heterotrimer of A, B and C subunits.

The catalysed reaction is L-glutamyl-tRNA(Gln) + L-glutamine + ATP + H2O = L-glutaminyl-tRNA(Gln) + L-glutamate + ADP + phosphate + H(+). It catalyses the reaction L-aspartyl-tRNA(Asn) + L-glutamine + ATP + H2O = L-asparaginyl-tRNA(Asn) + L-glutamate + ADP + phosphate + 2 H(+). Functionally, allows the formation of correctly charged Asn-tRNA(Asn) or Gln-tRNA(Gln) through the transamidation of misacylated Asp-tRNA(Asn) or Glu-tRNA(Gln) in organisms which lack either or both of asparaginyl-tRNA or glutaminyl-tRNA synthetases. The reaction takes place in the presence of glutamine and ATP through an activated phospho-Asp-tRNA(Asn) or phospho-Glu-tRNA(Gln). This is Aspartyl/glutamyl-tRNA(Asn/Gln) amidotransferase subunit B from Rhizobium johnstonii (strain DSM 114642 / LMG 32736 / 3841) (Rhizobium leguminosarum bv. viciae).